Consider the following 768-residue polypeptide: Histone-lysine N-methyltransferase, H3 lysine-36 specific (768 aa).

An AWS domain is found at 45–90 (AEVMACDCKPGPTACDEDSGCINRLTSIECVRCCKGCQNKRFQGKK). Positions 92–209 (ASVDVISTEK…RGEEVTFDYN (118 aa)) constitute an SET domain. The region spanning 216 to 232 (EAQACYCGEKNCVGFLG) is the Post-SET domain. The span at 411 to 452 (KIDPDGDEHSVSRGTSEEVTKESSKSEEPNDVEVVKVNKKAD) shows a compositional bias: basic and acidic residues. Disordered stretches follow at residues 411-508 (KIDP…KGWQ), 533-610 (KASR…VNAQ), and 680-768 (VVKR…IDLE). Polar residues predominate over residues 453–469 (NNGNGVTDSPSTRSESP). The WW domain occupies 501 to 534 (RSLPKGWQFANDPQGKVYYYNLELNIQQWDFPKA). 3 stretches are compositionally biased toward basic and acidic residues: residues 555-568 (NRRDERRDNSETRE), 682-734 (KRLE…KGEE), and 755-768 (TVKKPKVDMEIDLE).

It belongs to the class V-like SAM-binding methyltransferase superfamily. Histone-lysine methyltransferase family. SET2 subfamily.

Its subcellular location is the nucleus. It localises to the chromosome. The enzyme catalyses L-lysyl(36)-[histone H3] + 3 S-adenosyl-L-methionine = N(6),N(6),N(6)-trimethyl-L-lysyl(36)-[histone H3] + 3 S-adenosyl-L-homocysteine + 3 H(+). Functionally, histone methyltransferase that trimethylates histone H3 'Lys-36' forming H3K36me3. Involved in transcription elongation as well as in transcription repression. The sequence is that of Histone-lysine N-methyltransferase, H3 lysine-36 specific (set-2) from Yarrowia lipolytica (strain CLIB 122 / E 150) (Yeast).